Reading from the N-terminus, the 264-residue chain is Small ribosomal subunit protein uS2 (264 aa).

This sequence belongs to the universal ribosomal protein uS2 family.

The chain is Small ribosomal subunit protein uS2 from Helicobacter pylori (strain Shi470).